Reading from the N-terminus, the 293-residue chain is tRNA(His) guanylyltransferase (293 aa).

Mg(2+) is bound by residues Asp-29, Gly-30, and Asp-76. GTP-binding positions include 29 to 34 (DGRGFT) and 75 to 76 (SD). Residues 226–252 (KKVSEEEAEEMSSSAVPEVKSKSQVEK) are disordered.

The protein belongs to the tRNA(His) guanylyltransferase family. Mg(2+) serves as cofactor.

It catalyses the reaction a 5'-end ribonucleotide-tRNA(His) + GTP + ATP + H2O = a 5'-end phospho-guanosine-ribonucleotide-tRNA(His) + AMP + 2 diphosphate + H(+). Functionally, adds a GMP to the 5'-end of tRNA(His) after transcription and RNase P cleavage. The sequence is that of tRNA(His) guanylyltransferase (rgt-1) from Neurospora crassa (strain ATCC 24698 / 74-OR23-1A / CBS 708.71 / DSM 1257 / FGSC 987).